The chain runs to 544 residues: Chaperonin GroEL (544 aa).

ATP is bound by residues 29 to 32, 86 to 90, Gly-413, 476 to 478, and Asp-492; these read TLGP, DGTTT, and NAL.

This sequence belongs to the chaperonin (HSP60) family. As to quaternary structure, forms a cylinder of 14 subunits composed of two heptameric rings stacked back-to-back. Interacts with the co-chaperonin GroES.

It is found in the cytoplasm. It carries out the reaction ATP + H2O + a folded polypeptide = ADP + phosphate + an unfolded polypeptide.. In terms of biological role, together with its co-chaperonin GroES, plays an essential role in assisting protein folding. The GroEL-GroES system forms a nano-cage that allows encapsulation of the non-native substrate proteins and provides a physical environment optimized to promote and accelerate protein folding. The polypeptide is Chaperonin GroEL (Desulfitobacterium hafniense (strain Y51)).